A 176-amino-acid polypeptide reads, in one-letter code: Peptidoglycan-associated lipoprotein (176 aa).

The N-terminal stretch at 1 to 21 is a signal peptide; sequence MKAGSFYKLGLLVASAVLVAA. Cys22 carries the N-palmitoyl cysteine lipid modification. Cys22 is lipidated: S-diacylglycerol cysteine. Residues 60 to 176 enclose the OmpA-like domain; the sequence is YTTQAPHNQL…RVEFIYEATR (117 aa).

This sequence belongs to the Pal lipoprotein family. As to quaternary structure, the Tol-Pal system is composed of five core proteins: the inner membrane proteins TolA, TolQ and TolR, the periplasmic protein TolB and the outer membrane protein Pal. They form a network linking the inner and outer membranes and the peptidoglycan layer.

It localises to the cell outer membrane. Functionally, part of the Tol-Pal system, which plays a role in outer membrane invagination during cell division and is important for maintaining outer membrane integrity. Very strongly associated with the peptidoglycan. This Legionella pneumophila protein is Peptidoglycan-associated lipoprotein.